Consider the following 318-residue polypeptide: MQNRNFFEYPKNWIILLIPIFTTFNLLFTSDCYAFPIYAQQNYENPREATGRIVCANCHLAKGPVDIEVPKTVFPDTVFEAVVKIPYDTQIKQVLANGKKGGLNVGAVLILPEGFQLAPSDRIPAEIKEKIGNLAFQPYSEDKKNLLVIGPIPGKTYQEIIFPILSPDPNVNKESNFLKYPIYVGGNRGRGQVYPDGSKSNNNVFNSPATGKITKIVDNKKAGFELSITTVDGSSIVEIIPPGATFLVSEGDSVKIDQPLTTNPNVGGFGQADGEIVLQDPARLQGLLVFLFLVVLAQVFLVLKKKQYEKVQLAEMNF.

The first 34 residues, 1 to 34 (MQNRNFFEYPKNWIILLIPIFTTFNLLFTSDCYA), serve as a signal peptide directing secretion. Heme contacts are provided by phenylalanine 35, cysteine 55, cysteine 58, and histidine 59. The helical transmembrane segment at 284 to 303 (LQGLLVFLFLVVLAQVFLVL) threads the bilayer.

Belongs to the cytochrome f family. The 4 large subunits of the cytochrome b6-f complex are cytochrome b6, subunit IV (17 kDa polypeptide, petD), cytochrome f and the Rieske protein, while the 4 small subunits are PetG, PetL, PetM and PetN. The complex functions as a dimer. It depends on heme as a cofactor.

The protein localises to the plastid. The protein resides in the chloroplast thylakoid membrane. Functionally, component of the cytochrome b6-f complex, which mediates electron transfer between photosystem II (PSII) and photosystem I (PSI), cyclic electron flow around PSI, and state transitions. In Chaetosphaeridium globosum (Charophycean green alga), this protein is Cytochrome f.